A 341-amino-acid polypeptide reads, in one-letter code: Protein pelota homolog (341 aa).

This sequence belongs to the eukaryotic release factor 1 family. Pelota subfamily. Monomer. A divalent metal cation is required as a cofactor.

It localises to the cytoplasm. In terms of biological role, may function in recognizing stalled ribosomes, interact with stem-loop structures in stalled mRNA molecules, and effect endonucleolytic cleavage of the mRNA. May play a role in the release non-functional ribosomes and degradation of damaged mRNAs. Has endoribonuclease activity. This chain is Protein pelota homolog, found in Methanoregula boonei (strain DSM 21154 / JCM 14090 / 6A8).